Reading from the N-terminus, the 149-residue chain is CCAAT/enhancer-binding protein gamma (149 aa).

Polar residues predominate over residues 1-12; the sequence is MSKVSQQNSTPG. The disordered stretch occupies residues 1 to 92; it reads MSKVSQQNST…SKQKAQDTLQ (92 aa). K3 participates in a covalent cross-link: Glycyl lysine isopeptide (Lys-Gly) (interchain with G-Cter in SUMO2). The span at 28-37 shows a compositional bias: low complexity; it reads LQQVPQLVPA. The span at 56-72 shows a compositional bias: basic and acidic residues; sequence SPMDRNSDEYRQRRERN. The bZIP domain maps to 62-125; the sequence is SDEYRQRRER…SVLKDLFLEH (64 aa). Residues 66 to 93 form a basic motif region; the sequence is RQRRERNNMAVKKSRLKSKQKAQDTLQR. Positions 97–118 are leucine-zipper; sequence LKEENERLEAKIKLLTKELSVL. Positions 128–149 are disordered; the sequence is NLADNVQPSSTENTTNPDKAGQ. The span at 131–149 shows a compositional bias: polar residues; that stretch reads DNVQPSSTENTTNPDKAGQ.

The protein belongs to the bZIP family. C/EBP subfamily. In terms of assembly, binds DNA as a dimer and can form stable heterodimers with CEBPA and CEBPB. Interacts with ZNF638; this interaction increases transcriptional activation.

The protein localises to the nucleus. Transcription factor that binds to the promoter and the enhancer regions of target genes. Binds to the enhancer element PRE-I (positive regulatory element-I) of the IL-4 gene. Binds to the promoter and the enhancer of the immunoglobulin heavy chain. Binds to GPE1, a cis-acting element in the G-CSF gene promoter. In Bos taurus (Bovine), this protein is CCAAT/enhancer-binding protein gamma (CEBPG).